Consider the following 739-residue polypeptide: Thiamine biosynthesis multifunctional protein ThiED (739 aa).

Residues 1–210 form a thiamine-phosphate synthase region; it reads MTDFSLYLVT…PSPAEAAREL (210 aa). 4-amino-2-methyl-5-(diphosphooxymethyl)pyrimidine is bound by residues 37–41 and N69; that span reads QLRDK. The Mg(2+) site is built by D70 and D88. T107 provides a ligand contact to 4-amino-2-methyl-5-(diphosphooxymethyl)pyrimidine. A 2-[(2R,5Z)-2-carboxy-4-methylthiazol-5(2H)-ylidene]ethyl phosphate-binding site is contributed by 140-142; the sequence is TDT. K143 lines the 4-amino-2-methyl-5-(diphosphooxymethyl)pyrimidine pocket. 2-[(2R,5Z)-2-carboxy-4-methylthiazol-5(2H)-ylidene]ethyl phosphate is bound by residues G174 and 194-195; that span reads VS. Positions 226-481 are hydroxymethylpyrimidine/phosphomethylpyrimidine kinase; it reads LTIAGTDPTG…GSGSGPVDHF (256 aa). Q263 provides a ligand contact to 4-amino-5-hydroxymethyl-2-methylpyrimidine. The interval 527 to 739 is thiaminase-2; sequence YTRALWEATG…FDQATRQGWN (213 aa).

It in the N-terminal section; belongs to the thiamine-phosphate synthase family. This sequence in the central section; belongs to the ThiD family. The protein in the C-terminal section; belongs to the thiaminase-2 family. Mg(2+) serves as cofactor.

It catalyses the reaction 2-[(2R,5Z)-2-carboxy-4-methylthiazol-5(2H)-ylidene]ethyl phosphate + 4-amino-2-methyl-5-(diphosphooxymethyl)pyrimidine + 2 H(+) = thiamine phosphate + CO2 + diphosphate. The enzyme catalyses 2-(2-carboxy-4-methylthiazol-5-yl)ethyl phosphate + 4-amino-2-methyl-5-(diphosphooxymethyl)pyrimidine + 2 H(+) = thiamine phosphate + CO2 + diphosphate. It carries out the reaction 4-methyl-5-(2-phosphooxyethyl)-thiazole + 4-amino-2-methyl-5-(diphosphooxymethyl)pyrimidine + H(+) = thiamine phosphate + diphosphate. The catalysed reaction is 4-amino-5-hydroxymethyl-2-methylpyrimidine + ATP = 4-amino-2-methyl-5-(phosphooxymethyl)pyrimidine + ADP + H(+). It catalyses the reaction 4-amino-2-methyl-5-(phosphooxymethyl)pyrimidine + ATP = 4-amino-2-methyl-5-(diphosphooxymethyl)pyrimidine + ADP. It functions in the pathway cofactor biosynthesis; thiamine diphosphate biosynthesis; 4-amino-2-methyl-5-diphosphomethylpyrimidine from 5-amino-1-(5-phospho-D-ribosyl)imidazole: step 3/3. Its pathway is cofactor biosynthesis; thiamine diphosphate biosynthesis; thiamine phosphate from 4-amino-2-methyl-5-diphosphomethylpyrimidine and 4-methyl-5-(2-phosphoethyl)-thiazole: step 1/1. Its function is as follows. Condenses 4-methyl-5-(beta-hydroxyethyl)thiazole monophosphate (THZ-P) and 2-methyl-4-amino-5-hydroxymethyl pyrimidine pyrophosphate (HMP-PP) to form thiamine monophosphate (TMP). Catalyzes the phosphorylation of hydroxymethylpyrimidine phosphate (HMP-P) to HMP-PP, and of HMP to HMP-P. The chain is Thiamine biosynthesis multifunctional protein ThiED (thiED) from Corynebacterium efficiens (strain DSM 44549 / YS-314 / AJ 12310 / JCM 11189 / NBRC 100395).